Consider the following 467-residue polypeptide: Glutamate--tRNA ligase (467 aa).

The short motif at 12 to 22 is the 'HIGH' region element; the sequence is PSPTGYLHIGG. Residues 114–128 show a composition bias toward basic and acidic residues; that stretch reads EQEAKKEKPRYDGRW. Residues 114-140 form a disordered region; sequence EQEAKKEKPRYDGRWRPAPGKTLPTPP. A 'KMSKS' region motif is present at residues 244–248; it reads KLSKR. Lys-247 lines the ATP pocket.

It belongs to the class-I aminoacyl-tRNA synthetase family. Glutamate--tRNA ligase type 1 subfamily. In terms of assembly, monomer.

Its subcellular location is the cytoplasm. It catalyses the reaction tRNA(Glu) + L-glutamate + ATP = L-glutamyl-tRNA(Glu) + AMP + diphosphate. Catalyzes the attachment of glutamate to tRNA(Glu) in a two-step reaction: glutamate is first activated by ATP to form Glu-AMP and then transferred to the acceptor end of tRNA(Glu). The polypeptide is Glutamate--tRNA ligase (Azoarcus sp. (strain BH72)).